The chain runs to 215 residues: UPF0323 lipoprotein jhp_0217 (215 aa).

The N-terminal stretch at 1-27 is a signal peptide; it reads MKKPYRKISDYAIVGGLSALVMVSIVG. C28 carries the N-palmitoyl cysteine lipid modification. C28 carries the S-diacylglycerol cysteine lipid modification. Residues 158–169 are compositionally biased toward polar residues; sequence QRTYKSPQAYQR. Positions 158 to 215 are disordered; the sequence is QRTYKSPQAYQRSQNSFSKSAPSASSMGTASKGQSGFFGSSRPTSSPAISSGTRGFNA. A compositionally biased stretch (low complexity) spans 170 to 183; that stretch reads SQNSFSKSAPSASS. Positions 184 to 195 are enriched in polar residues; the sequence is MGTASKGQSGFF. The span at 197–208 shows a compositional bias: low complexity; that stretch reads SSRPTSSPAISS.

It belongs to the UPF0323 family.

It localises to the cell membrane. The chain is UPF0323 lipoprotein jhp_0217 from Helicobacter pylori (strain J99 / ATCC 700824) (Campylobacter pylori J99).